The primary structure comprises 217 residues: Membrane-associated progesterone receptor component 2 (217 aa).

Ser15 is a glycosylation site (O-linked (Xyl...) (chondroitin sulfate) serine). The chain crosses the membrane as a helical span at residues 40-62 (ALLATGGEMLLNVALVALVLLGA). Phosphoserine occurs at positions 84, 98, and 202. Residues 96-195 (DFSLEQLRQY…EKYDYVGRLL (100 aa)) enclose the Cytochrome b5 heme-binding domain. The disordered stretch occupies residues 196-217 (KPGEEPSEYTDEEDTKDHSKQD). Residues 200–209 (EPSEYTDEED) are compositionally biased toward acidic residues. A Phosphotyrosine modification is found at Tyr204. Thr205 bears the Phosphothreonine mark.

It belongs to the cytochrome b5 family. MAPR subfamily. As to quaternary structure, interacts with PGRMC1. Interacts with AAAS.

The protein localises to the membrane. It localises to the nucleus envelope. Its subcellular location is the endoplasmic reticulum. It is found in the secreted. Functionally, required for the maintenance of uterine histoarchitecture and normal female reproductive lifespan. May serve as a universal non-classical progesterone receptor in the uterus. Intracellular heme chaperone required for delivery of labile, or signaling heme, to the nucleus. Plays a role in adipocyte function and systemic glucose homeostasis. In brown fat, which has a high demand for heme, delivery of labile heme in the nucleus regulates the activity of heme-responsive transcriptional repressors such as NR1D1 and BACH1. The sequence is that of Membrane-associated progesterone receptor component 2 from Rattus norvegicus (Rat).